A 3354-amino-acid chain; its full sequence is Cadherin-23 (3354 aa).

An N-terminal signal peptide occupies residues 1–23 (MGRHVATSCHVAWLLVLISGCWG). Residues 24-3064 (QVNRLPFFTN…SVRLPDDMSA (3041 aa)) lie on the Extracellular side of the membrane. Cadherin domains are found at residues 34 to 132 (HFFD…APTF), 133 to 236 (HNQP…DPIF), 237 to 348 (INLP…APEF), 349 to 460 (NSSE…RPIF), 461 to 561 (SQPL…VPTF), 562 to 671 (QKDA…PPTF), 672 to 784 (SKPA…APYY), 779 to 890 (KDAP…DPTF), 891 to 995 (QNLP…TPTF), 996 to 1102 (FPAV…RPIF), 1103 to 1208 (LQSS…APVF), 1210 to 1313 (QQQY…AVQF), 1314 to 1418 (SNAS…SPRF), 1420 to 1527 (FTSD…PPVI), 1529 to 1634 (SPFG…APMF), 1635 to 1744 (QQPH…VPTF), 1745 to 1851 (PRDY…DPVL), 1852 to 1959 (LNLP…HPLF), 1960 to 2069 (TKST…RPTF), 2070 to 2174 (SPAT…RPEF), 2175 to 2293 (LNPI…TPQF), 2297 to 2402 (GITY…NPIF), 2403 to 2509 (DQPS…RPQF), 2510 to 2611 (SKPQ…RPVF), 2614 to 2722 (PPNG…EPLF), 2729 to 2846 (SPQY…PPRF), and 2847 to 2975 (TKAE…EEEF). Residues N155 and N206 are each glycosylated (N-linked (GlcNAc...) asparagine). Residues N349, N393, N434, N466, N472, N652, N694, N765, N810, N827, N941, N1001, N1018, N1171, N1282, N1315, N1473, N1534, N1651, N1667, N1818, N1857, N1889, N1902, N2013, N2050, N2129, N2168, N2195, N2263, N2357, and N2369 are each glycosylated (N-linked (GlcNAc...) asparagine). 7 N-linked (GlcNAc...) asparagine glycosylation sites follow: N2616, N2749, N2808, N2877, N2896, N2941, and N2981. A helical membrane pass occupies residues 3065-3085 (LQMAIIVLAILLFLAAMLFVL). Residues 3086 to 3354 (MNWYYRTVHK…METPLEITEL (269 aa)) are Cytoplasmic-facing.

Antiparallel heterodimer with PCDH15. Interacts with USH1C and USH1G. In terms of tissue distribution, particularly strong expression in the retina. Found also in the cochlea.

The protein localises to the cell membrane. Cadherins are calcium-dependent cell adhesion proteins. They preferentially interact with themselves in a homophilic manner in connecting cells. CDH23 is required for establishing and/or maintaining the proper organization of the stereocilia bundle of hair cells in the cochlea and the vestibule during late embryonic/early postnatal development. It is part of the functional network formed by USH1C, USH1G, CDH23 and MYO7A that mediates mechanotransduction in cochlear hair cells. Required for normal hearing. The protein is Cadherin-23 of Homo sapiens (Human).